A 461-amino-acid chain; its full sequence is V-type ATP synthase beta chain (461 aa).

The protein belongs to the ATPase alpha/beta chains family.

In terms of biological role, produces ATP from ADP in the presence of a proton gradient across the membrane. The V-type beta chain is a regulatory subunit. In Clostridium botulinum (strain Langeland / NCTC 10281 / Type F), this protein is V-type ATP synthase beta chain.